The sequence spans 161 residues: SsrA-binding protein (161 aa).

The disordered stretch occupies residues 140-161 (KRESIKERDWKRDKQRLLKDRG).

This sequence belongs to the SmpB family.

The protein localises to the cytoplasm. Functionally, required for rescue of stalled ribosomes mediated by trans-translation. Binds to transfer-messenger RNA (tmRNA), required for stable association of tmRNA with ribosomes. tmRNA and SmpB together mimic tRNA shape, replacing the anticodon stem-loop with SmpB. tmRNA is encoded by the ssrA gene; the 2 termini fold to resemble tRNA(Ala) and it encodes a 'tag peptide', a short internal open reading frame. During trans-translation Ala-aminoacylated tmRNA acts like a tRNA, entering the A-site of stalled ribosomes, displacing the stalled mRNA. The ribosome then switches to translate the ORF on the tmRNA; the nascent peptide is terminated with the 'tag peptide' encoded by the tmRNA and targeted for degradation. The ribosome is freed to recommence translation, which seems to be the essential function of trans-translation. This is SsrA-binding protein from Sphingopyxis alaskensis (strain DSM 13593 / LMG 18877 / RB2256) (Sphingomonas alaskensis).